A 174-amino-acid polypeptide reads, in one-letter code: Inner membrane protein p22 (174 aa).

At 1-7 the chain is on the intravirion side; it reads MLHIKMT. The chain crosses the membrane as a helical span at residues 8–28; sequence ISTLLIALIVLLIIILVVFLY. Residues 29 to 174 lie on the Virion surface side of the membrane; it reads HKKQQPPKKV…LYLPRNHKYA (146 aa).

This sequence belongs to the asfivirus inner membrane protein p22 family.

The protein resides in the virion membrane. The protein localises to the host cell membrane. The sequence is that of Inner membrane protein p22 from African swine fever virus (isolate Pig/Kenya/KEN-50/1950) (ASFV).